The chain runs to 580 residues: MSKLKTLNRQFISNLETHKVTTDAKRNLILSILKSTTTKREAKNYLTKYQNQFDFNDDLDFNKSIKIKNEQSSLTNRDSQRELFINRFLNQSNPFINVYDKEDVKLQKVPLRLAIFKIKFTKITIKQWKGIAETFKRLITLGISPIIMLDYDHLPSDSYKNNELYMINQGNKMLNYLGHPEEESDLKVTLLRSLFTSHKGVPTLDSLESILIPLYQGIIPIIQPIVYNADLSKQEFLASDKLLLGLSSALIEKRTTDLLSIEKIVMIDPIGGIPSIERHQTSHVFINLSQEYSDILSELFIGHIEPKYRDTHVDNLNTMNNVLSYINEKSGNDETTGIITTPEIMSINIDQLNPIIYNVLTDRAIISSSLPSTTNRTPHLSTTIIKKGVEVQIFDVDNYDKDLTMQNLFDDKLVNKEKLIDLLNDSFGKSLDVGPYLDRINKNIATVVIVGDYDGAAIITWEYSKGEKIAYLDKFAIAKKNQGLPGLADVIFKIILQSHPFELIWRSRKNNPVNKWYFERCCGCMSAPDSQWKIFYTGEVFDKKIDRFKRKLRHQNGVVDIDRKLQQYSEICEGITPSFK.

Residues 403 to 560 (LTMQNLFDDK…KLRHQNGVVD (158 aa)) form the N-acetyltransferase domain.

This sequence belongs to the acetyltransferase family.

The protein resides in the mitochondrion. It carries out the reaction L-glutamate + acetyl-CoA = N-acetyl-L-glutamate + CoA + H(+). It participates in amino-acid biosynthesis; L-arginine biosynthesis; N(2)-acetyl-L-ornithine from L-glutamate: step 1/4. In terms of biological role, N-acetylglutamate synthase involved in arginine biosynthesis. This Candida albicans (strain SC5314 / ATCC MYA-2876) (Yeast) protein is Amino-acid acetyltransferase, mitochondrial (ARG2).